Reading from the N-terminus, the 361-residue chain is Glycerophosphodiester phosphodiesterase GDPD1, chloroplastic (361 aa).

The N-terminal 53 residues, 1 to 53, are a transit peptide targeting the chloroplast; it reads MSLKAIHVSEVPSLDHFPENPSLICSSRKANNKFVVVGHRGHGMNMSQSPDLR. One can recognise a GP-PDE domain in the interval 54–323; the sequence is FSALKENSIL…DHVEEITEAV (270 aa).

Belongs to the glycerophosphoryl diester phosphodiesterase family. Requires Mg(2+) as cofactor. Expressed in roots, shoots, rosette leaves, stems, flowers and siliques.

The protein resides in the plastid. The protein localises to the chloroplast. The catalysed reaction is a sn-glycero-3-phosphodiester + H2O = an alcohol + sn-glycerol 3-phosphate + H(+). Its function is as follows. Hydrolyzes glycerolphosphoglycerol, glycerophosphocholine and glycerophosphoethanolamine in vitro. May be involved in release of inorganic phosphate (Pi) from phospholipids during Pi starvation. The sequence is that of Glycerophosphodiester phosphodiesterase GDPD1, chloroplastic from Arabidopsis thaliana (Mouse-ear cress).